The sequence spans 314 residues: Lipoyl synthase (314 aa).

Positions 40, 45, 51, 67, 71, 74, and 280 each coordinate [4Fe-4S] cluster. A Radical SAM core domain is found at 53 to 269; sequence SERKTATFMI…KNIALEKGFS (217 aa).

The protein belongs to the radical SAM superfamily. Lipoyl synthase family. [4Fe-4S] cluster serves as cofactor.

The protein resides in the cytoplasm. The catalysed reaction is [[Fe-S] cluster scaffold protein carrying a second [4Fe-4S](2+) cluster] + N(6)-octanoyl-L-lysyl-[protein] + 2 oxidized [2Fe-2S]-[ferredoxin] + 2 S-adenosyl-L-methionine + 4 H(+) = [[Fe-S] cluster scaffold protein] + N(6)-[(R)-dihydrolipoyl]-L-lysyl-[protein] + 4 Fe(3+) + 2 hydrogen sulfide + 2 5'-deoxyadenosine + 2 L-methionine + 2 reduced [2Fe-2S]-[ferredoxin]. It functions in the pathway protein modification; protein lipoylation via endogenous pathway; protein N(6)-(lipoyl)lysine from octanoyl-[acyl-carrier-protein]. Functionally, catalyzes the radical-mediated insertion of two sulfur atoms into the C-6 and C-8 positions of the octanoyl moiety bound to the lipoyl domains of lipoate-dependent enzymes, thereby converting the octanoylated domains into lipoylated derivatives. This chain is Lipoyl synthase, found in Oceanobacillus iheyensis (strain DSM 14371 / CIP 107618 / JCM 11309 / KCTC 3954 / HTE831).